A 330-amino-acid polypeptide reads, in one-letter code: Putative glycosyltransferase HI_0258 (330 aa).

Basic and acidic residues predominate over residues 1–31 (MTDRQTDRQTDRQTDRQTDRQTDRQTDRQTD). The disordered stretch occupies residues 1–32 (MTDRQTDRQTDRQTDRQTDRQTDRQTDRQTDG). Residues 44–49 (SSDHYY) and 140–141 (DV) contribute to the UDP site. Mn(2+) is bound by residues Asp140, Asp142, and His270. 270–276 (HYCGPNK) provides a ligand contact to UDP.

This sequence belongs to the glycosyltransferase 8 family.

In Haemophilus influenzae (strain ATCC 51907 / DSM 11121 / KW20 / Rd), this protein is Putative glycosyltransferase HI_0258.